Here is a 602-residue protein sequence, read N- to C-terminus: Cholinesterase (602 aa).

The N-terminal stretch at methionine 1–threonine 28 is a signal peptide. An N-linked (GlcNAc...) asparagine glycan is attached at asparagine 85. The cysteines at positions 93 and 120 are disulfide-linked. Residue asparagine 134 is glycosylated (N-linked (GlcNAc...) asparagine). Position 144-145 (glycine 144–glycine 145) interacts with substrate. The active-site Acyl-ester intermediate is serine 226. Serine 226 is subject to Phosphoserine. 2 N-linked (GlcNAc...) asparagine glycosylation sites follow: asparagine 269 and asparagine 284. An intrachain disulfide couples cysteine 280 to cysteine 291. Glutamate 353 functions as the Charge relay system in the catalytic mechanism. A glycan (N-linked (GlcNAc...) asparagine) is linked at asparagine 369. Cysteine 428 and cysteine 547 are disulfide-bonded. Histidine 466 acts as the Charge relay system in catalysis. Residues asparagine 483, asparagine 509, asparagine 513, and asparagine 514 are each glycosylated (N-linked (GlcNAc...) asparagine).

It belongs to the type-B carboxylesterase/lipase family. In terms of assembly, homotetramer; disulfide-linked. Dimer of dimers.

The protein localises to the secreted. It catalyses the reaction an acylcholine + H2O = a carboxylate + choline + H(+). Its function is as follows. Esterase with broad substrate specificity. Contributes to the inactivation of the neurotransmitter acetylcholine. Can degrade neurotoxic organophosphate esters. In Felis catus (Cat), this protein is Cholinesterase (BCHE).